A 380-amino-acid polypeptide reads, in one-letter code: Queuine tRNA-ribosyltransferase (380 aa).

Asp-95 acts as the Proton acceptor in catalysis. Substrate contacts are provided by residues 95–99 (DSGGF), Asp-149, Gln-192, and Gly-219. Positions 250-256 (GVGSADA) are RNA binding. The active-site Nucleophile is Asp-269. Residues 274–278 (TRIAR) are RNA binding; important for wobble base 34 recognition. Zn(2+)-binding residues include Cys-307, Cys-309, Cys-312, and His-338.

Belongs to the queuine tRNA-ribosyltransferase family. In terms of assembly, homodimer. Within each dimer, one monomer is responsible for RNA recognition and catalysis, while the other monomer binds to the replacement base PreQ1. Requires Zn(2+) as cofactor.

The enzyme catalyses 7-aminomethyl-7-carbaguanine + guanosine(34) in tRNA = 7-aminomethyl-7-carbaguanosine(34) in tRNA + guanine. It participates in tRNA modification; tRNA-queuosine biosynthesis. In terms of biological role, catalyzes the base-exchange of a guanine (G) residue with the queuine precursor 7-aminomethyl-7-deazaguanine (PreQ1) at position 34 (anticodon wobble position) in tRNAs with GU(N) anticodons (tRNA-Asp, -Asn, -His and -Tyr). Catalysis occurs through a double-displacement mechanism. The nucleophile active site attacks the C1' of nucleotide 34 to detach the guanine base from the RNA, forming a covalent enzyme-RNA intermediate. The proton acceptor active site deprotonates the incoming PreQ1, allowing a nucleophilic attack on the C1' of the ribose to form the product. After dissociation, two additional enzymatic reactions on the tRNA convert PreQ1 to queuine (Q), resulting in the hypermodified nucleoside queuosine (7-(((4,5-cis-dihydroxy-2-cyclopenten-1-yl)amino)methyl)-7-deazaguanosine). This Lactiplantibacillus plantarum (strain ATCC BAA-793 / NCIMB 8826 / WCFS1) (Lactobacillus plantarum) protein is Queuine tRNA-ribosyltransferase.